Reading from the N-terminus, the 213-residue chain is Citrate synthase, mitochondrial (213 aa).

The active site involves His-74. N6-acetyllysine; alternate occurs at positions 94 and 100. N6-succinyllysine; alternate occurs at positions 94 and 100. His-120 is an active-site residue. Arg-129 is a binding site for oxaloacetate. Lys-148 is subject to N6-acetyllysine; alternate. Lys-148 bears the N6-succinyllysine; alternate mark. Lys-155 bears the N6-acetyllysine mark. The residue at position 166 (Lys-166) is an N6-acetyllysine; alternate. N6-succinyllysine; alternate is present on Lys-166. At Lys-168 the chain carries N6,N6,N6-trimethyllysine. Residue Asp-175 is part of the active site. Position 201 (Arg-201) interacts with oxaloacetate.

Belongs to the citrate synthase family. As to quaternary structure, homodimer. In response to mitochondrial stress, the precursor protein is ubiquitinated by the SIFI complex in the cytoplasm before mitochondrial import, leading to its degradation. Within the SIFI complex, UBR4 initiates ubiquitin chain that are further elongated or branched by KCMF1.

It is found in the mitochondrion matrix. It carries out the reaction oxaloacetate + acetyl-CoA + H2O = citrate + CoA + H(+). It participates in carbohydrate metabolism; tricarboxylic acid cycle; isocitrate from oxaloacetate: step 1/2. Functionally, key enzyme of the Krebs tricarboxylic acid cycle which catalyzes the synthesis of citrate from acetyl coenzyme A and oxaloacetate. The polypeptide is Citrate synthase, mitochondrial (Mesocricetus auratus (Golden hamster)).